We begin with the raw amino-acid sequence, 253 residues long: Methionine aminopeptidase (253 aa).

H78 contributes to the substrate binding site. The a divalent metal cation site is built by D95, D106, and H169. A substrate-binding site is contributed by H176. A divalent metal cation is bound by residues E206 and E237.

The protein belongs to the peptidase M24A family. Methionine aminopeptidase type 1 subfamily. Monomer. Co(2+) is required as a cofactor. Zn(2+) serves as cofactor. The cofactor is Mn(2+). It depends on Fe(2+) as a cofactor.

It catalyses the reaction Release of N-terminal amino acids, preferentially methionine, from peptides and arylamides.. In terms of biological role, removes the N-terminal methionine from nascent proteins. The N-terminal methionine is often cleaved when the second residue in the primary sequence is small and uncharged (Met-Ala-, Cys, Gly, Pro, Ser, Thr, or Val). Requires deformylation of the N(alpha)-formylated initiator methionine before it can be hydrolyzed. The sequence is that of Methionine aminopeptidase from Helicobacter pylori (strain ATCC 700392 / 26695) (Campylobacter pylori).